The primary structure comprises 434 residues: 3-phosphoshikimate 1-carboxyvinyltransferase (434 aa).

The 3-phosphoshikimate site is built by Lys-22, Ser-23, and Arg-27. Lys-22 lines the phosphoenolpyruvate pocket. The phosphoenolpyruvate site is built by Gly-93 and Arg-121. 3-phosphoshikimate is bound by residues Ser-168, Ser-169, Gln-170, Ser-199, Asp-320, and Lys-347. Gln-170 provides a ligand contact to phosphoenolpyruvate. Asp-320 serves as the catalytic Proton acceptor. Residues Arg-351, Arg-394, and Lys-419 each contribute to the phosphoenolpyruvate site.

The protein belongs to the EPSP synthase family. In terms of assembly, monomer.

It is found in the cytoplasm. The enzyme catalyses 3-phosphoshikimate + phosphoenolpyruvate = 5-O-(1-carboxyvinyl)-3-phosphoshikimate + phosphate. It participates in metabolic intermediate biosynthesis; chorismate biosynthesis; chorismate from D-erythrose 4-phosphate and phosphoenolpyruvate: step 6/7. Functionally, catalyzes the transfer of the enolpyruvyl moiety of phosphoenolpyruvate (PEP) to the 5-hydroxyl of shikimate-3-phosphate (S3P) to produce enolpyruvyl shikimate-3-phosphate and inorganic phosphate. The sequence is that of 3-phosphoshikimate 1-carboxyvinyltransferase from Burkholderia vietnamiensis (strain G4 / LMG 22486) (Burkholderia cepacia (strain R1808)).